A 147-amino-acid chain; its full sequence is Heavy metal-associated isoprenylated plant protein 27 (147 aa).

The HMA domain maps to 18-82 (FQKVEIKVKM…VMHRTGKKAE (65 aa)). Positions 29 and 32 each coordinate a metal cation. Cysteine methyl ester is present on Cys-144. The S-farnesyl cysteine moiety is linked to residue Cys-144. The propeptide at 145–147 (TIM) is removed in mature form.

It belongs to the HIPP family. As to quaternary structure, interacts with UBP16. Interacts with ZHD11/HB29.

It is found in the membrane. In terms of biological role, heavy-metal-binding protein. Binds cadmium. May be involved in cadmium transport and play a role in cadmium detoxification. This chain is Heavy metal-associated isoprenylated plant protein 27, found in Arabidopsis thaliana (Mouse-ear cress).